The following is a 399-amino-acid chain: Lovastatin esterase (399 aa).

The active-site Nucleophile is the Ser57. Residues Lys60 and Tyr170 each act as proton acceptor in the active site.

The protein belongs to the class-A beta-lactamase family.

It carries out the reaction lovastatin + H2O = monacolin J + (S)-2-methylbutanoate + H(+). It catalyses the reaction pravastatin lactone + H2O = pravastatin diol lactone + (S)-2-methylbutanoate + H(+). The enzyme catalyses mevastatin + H2O = compactin diol lactone + (S)-2-methylbutanoate + H(+). In terms of biological role, esterase that can hydrolyze the side chain of lovastatin to produce monacolin J. Is also able to hydrolyze the side chains of mevastatin and pravastatin, but not simvastatin. The sequence is that of Lovastatin esterase from Penicillium rubens (strain ATCC 28089 / DSM 1075 / NRRL 1951 / Wisconsin 54-1255) (Penicillium chrysogenum).